The primary structure comprises 315 residues: uncharacterized protein (315 aa).

The next 3 membrane-spanning stretches (helical) occupy residues 18–38 (IWFIIFYLFVIQALGSAIISG), 202–222 (ILAIAMFIVIWPVTMGILAGI), and 244–264 (LIYAVVIAFVCTPVAIIVIVL). Residues 288–315 (VCSTGNRSSGSTDQDISTTKQQSQEAVA) are disordered.

It localises to the membrane. This is an uncharacterized protein from Saccharomyces cerevisiae (strain ATCC 204508 / S288c) (Baker's yeast).